A 349-amino-acid chain; its full sequence is Sensory histidine kinase/phosphatase NtrB (349 aa).

The 74-residue stretch at 5–78 (TLPDAGQILN…SLAAGQGFTD (74 aa)) folds into the PAS domain. A Histidine kinase domain is found at 136 to 349 (GLAHEIKNPL…EFSVYLPIRK (214 aa)). Residue histidine 139 is modified to Phosphohistidine; by autocatalysis. Lysine 329 contributes to the ATP binding site.

Post-translationally, autophosphorylated.

The protein resides in the cytoplasm. The catalysed reaction is ATP + protein L-histidine = ADP + protein N-phospho-L-histidine.. Functionally, member of the two-component regulatory system NtrB/NtrC, which controls expression of the nitrogen-regulated (ntr) genes in response to nitrogen limitation. Under conditions of nitrogen limitation, NtrB autophosphorylates and transfers the phosphoryl group to NtrC. In the presence of nitrogen, acts as a phosphatase that dephosphorylates and inactivates NtrC. The protein is Sensory histidine kinase/phosphatase NtrB (ntrB) of Klebsiella oxytoca.